The following is a 95-amino-acid chain: Aspartyl/glutamyl-tRNA(Asn/Gln) amidotransferase subunit C (95 aa).

It belongs to the GatC family. In terms of assembly, heterotrimer of A, B and C subunits.

The catalysed reaction is L-glutamyl-tRNA(Gln) + L-glutamine + ATP + H2O = L-glutaminyl-tRNA(Gln) + L-glutamate + ADP + phosphate + H(+). It catalyses the reaction L-aspartyl-tRNA(Asn) + L-glutamine + ATP + H2O = L-asparaginyl-tRNA(Asn) + L-glutamate + ADP + phosphate + 2 H(+). Functionally, allows the formation of correctly charged Asn-tRNA(Asn) or Gln-tRNA(Gln) through the transamidation of misacylated Asp-tRNA(Asn) or Glu-tRNA(Gln) in organisms which lack either or both of asparaginyl-tRNA or glutaminyl-tRNA synthetases. The reaction takes place in the presence of glutamine and ATP through an activated phospho-Asp-tRNA(Asn) or phospho-Glu-tRNA(Gln). The sequence is that of Aspartyl/glutamyl-tRNA(Asn/Gln) amidotransferase subunit C from Halorhodospira halophila (strain DSM 244 / SL1) (Ectothiorhodospira halophila (strain DSM 244 / SL1)).